Consider the following 432-residue polypeptide: Adenylosuccinate synthetase (432 aa).

GTP-binding positions include 12–18 (GDEGKGK) and 40–42 (GHT). The active-site Proton acceptor is aspartate 13. 2 residues coordinate Mg(2+): aspartate 13 and glycine 40. Residues 13–16 (DEGK), 38–41 (NAGH), threonine 129, arginine 143, glutamine 224, threonine 239, and arginine 303 each bind IMP. The Proton donor role is filled by histidine 41. 299-305 (VTTGRRR) lines the substrate pocket. Residues arginine 305, 331 to 333 (KLD), and 413 to 415 (GVG) each bind GTP.

Belongs to the adenylosuccinate synthetase family. Homodimer. It depends on Mg(2+) as a cofactor.

The protein localises to the cytoplasm. It carries out the reaction IMP + L-aspartate + GTP = N(6)-(1,2-dicarboxyethyl)-AMP + GDP + phosphate + 2 H(+). Its pathway is purine metabolism; AMP biosynthesis via de novo pathway; AMP from IMP: step 1/2. In terms of biological role, plays an important role in the de novo pathway of purine nucleotide biosynthesis. Catalyzes the first committed step in the biosynthesis of AMP from IMP. This Mycobacterium leprae (strain TN) protein is Adenylosuccinate synthetase.